The primary structure comprises 1799 residues: Bromodomain and WD repeat-containing protein 3 (1799 aa).

WD repeat units follow at residues 170–209 (IKMH…IWAT), 213–251 (RLLA…VWCL), 255–297 (APVA…FWQW), 307–347 (RPVK…IYYL), 353–393 (EKIA…IWQY), 400–452 (SIVL…VWNS), 456–495 (QLLH…IWDL), and 502–542 (RNYF…LFGF). Ser-693 bears the Phosphoserine mark. Residues 766-912 (KKPSYPIQRN…KKKKGGLVSM (147 aa)) form a disordered region. Residues 784–794 (SLRRTQRKRQH) are compositionally biased toward basic residues. The segment covering 795–816 (TYLTRSNIEHNSQASSQTSGVQ) has biased composition (polar residues). The span at 817 to 828 (EDSDSSSEEDET) shows a compositional bias: acidic residues. The span at 845–858 (SESSSSDSSSEYSD) shows a compositional bias: low complexity. A compositionally biased stretch (polar residues) spans 875 to 884 (RQATQKIYSS). 2 positions are modified to phosphoserine: Ser-884 and Ser-885. Residues 897 to 907 (KKPKQTKKKKG) are compositionally biased toward basic residues. Positions 1136–1243 (WGAHSRDEEC…DVLLRFIGDQ (108 aa)) constitute a Bromo 1 domain. Disordered regions lie at residues 1258-1291 (EDPD…KCRG), 1321-1366 (EPFR…IDTP), 1435-1482 (IQSQ…QNTS), and 1517-1723 (SPSS…AKRA). Residues 1260–1276 (PDSSDLEEDSEMVDLDS) show a composition bias toward acidic residues. One can recognise a Bromo 2 domain in the interval 1298-1427 (CNPDAWKKQC…ALFENHIKNI (130 aa)). Over residues 1333-1348 (PVQQQQEGESSQSVPP) the composition is skewed to low complexity. Residues 1438 to 1450 (QKRRRPRYRKRLR) are compositionally biased toward basic residues. 2 stretches are compositionally biased toward low complexity: residues 1451–1463 (SSSS…RAPS) and 1517–1530 (SPSS…SGNS). Phosphoserine is present on residues Ser-1574 and Ser-1576. Basic and acidic residues predominate over residues 1584 to 1596 (GEEKEMKETKEQV). Over residues 1598–1623 (LSSSESGELGSSLSSESTSGSDSDSE) the composition is skewed to low complexity. Positions 1624 to 1640 (STSRTDQDYVDGDHDYS) are enriched in basic and acidic residues. Basic residues-rich tracts occupy residues 1646–1663 (RPKR…RNWK) and 1681–1694 (RGGR…RGGR). Position 1760 is a phosphoserine (Ser-1760).

Its function is as follows. Plays a role in the regulation of cell morphology and cytoskeletal organization. Required in the control of cell shape. The sequence is that of Bromodomain and WD repeat-containing protein 3 (Brwd3) from Mus musculus (Mouse).